Consider the following 425-residue polypeptide: 3-phosphoshikimate 1-carboxyvinyltransferase (425 aa).

3-phosphoshikimate-binding residues include Lys22, Ser23, and Arg27. Position 22 (Lys22) interacts with phosphoenolpyruvate. Phosphoenolpyruvate contacts are provided by Gly95 and Arg123. Residues Ser169, Ser170, Gln171, Ser197, Asp313, Asn336, and Lys340 each coordinate 3-phosphoshikimate. Position 171 (Gln171) interacts with phosphoenolpyruvate. Asp313 functions as the Proton acceptor in the catalytic mechanism. 3 residues coordinate phosphoenolpyruvate: Arg344, Arg386, and Lys411.

Belongs to the EPSP synthase family. As to quaternary structure, monomer.

It localises to the cytoplasm. It catalyses the reaction 3-phosphoshikimate + phosphoenolpyruvate = 5-O-(1-carboxyvinyl)-3-phosphoshikimate + phosphate. The protein operates within metabolic intermediate biosynthesis; chorismate biosynthesis; chorismate from D-erythrose 4-phosphate and phosphoenolpyruvate: step 6/7. Catalyzes the transfer of the enolpyruvyl moiety of phosphoenolpyruvate (PEP) to the 5-hydroxyl of shikimate-3-phosphate (S3P) to produce enolpyruvyl shikimate-3-phosphate and inorganic phosphate. The protein is 3-phosphoshikimate 1-carboxyvinyltransferase of Marinomonas sp. (strain MWYL1).